Here is a 415-residue protein sequence, read N- to C-terminus: Camphor 5-monooxygenase (415 aa).

Residue Cys358 coordinates heme.

It belongs to the cytochrome P450 family. The cofactor is heme.

Its subcellular location is the cytoplasm. The catalysed reaction is 2 reduced [2Fe-2S]-[putidaredoxin] + (1R,4R)-camphor + O2 + 2 H(+) = (1R,4R,5R)-5-hydroxycamphor + 2 oxidized [2Fe-2S]-[putidaredoxin] + H2O. Its pathway is terpene metabolism; (R)-camphor degradation. Its function is as follows. Involved in a camphor oxidation system. The polypeptide is Camphor 5-monooxygenase (camC) (Pseudomonas putida (Arthrobacter siderocapsulatus)).